We begin with the raw amino-acid sequence, 352 residues long: Rhodopsin (352 aa).

Residues M1–K36 are Extracellular-facing. Residues N2 and N15 are each glycosylated (N-linked (GlcNAc...) asparagine). The helical transmembrane segment at Y37 to V61 threads the bilayer. Residues T62 to N73 lie on the Cytoplasmic side of the membrane. The chain crosses the membrane as a helical span at residues Y74 to Y96. At T97 to C110 the chain is on the extracellular side. A disulfide bridge links C110 with C187. The chain crosses the membrane as a helical span at residues Y111–I133. The 'Ionic lock' involved in activated form stabilization motif lies at E134–Y136. Topologically, residues E134–H152 are cytoplasmic. The chain crosses the membrane as a helical span at residues A153–V173. Over G174–S202 the chain is Extracellular. The helical transmembrane segment at F203–G224 threads the bilayer. Residues R225 to R252 are Cytoplasmic-facing. Residues M253–Y274 traverse the membrane as a helical segment. Residues I275–V286 lie on the Extracellular side of the membrane. The helical transmembrane segment at F287–V308 threads the bilayer. K296 is subject to N6-(retinylidene)lysine. The Cytoplasmic segment spans residues M309–A352. Residues C322 and C323 are each lipidated (S-palmitoyl cysteine). The disordered stretch occupies residues E332–A352. Residues T335 to A352 are compositionally biased toward low complexity.

It belongs to the G-protein coupled receptor 1 family. Opsin subfamily. Contains one covalently linked retinal chromophore. Upon light absorption, the covalently bound 11-cis-retinal is converted to all-trans-retinal. After hydrolysis of the Schiff base and release of the covalently bound all-trans-retinal, active rhodopsin is regenerated by binding of a fresh molecule of 11-cis-retinal. Expressed in rod-shaped photoreceptor cells in the retina that mediate vision in dim ligh (at protein level).

It localises to the membrane. The protein resides in the cell projection. It is found in the cilium. The protein localises to the photoreceptor outer segment. Photoreceptor required for image-forming vision at low light intensity. Required for photoreceptor cell viability after birth. Light-induced isomerization of 11-cis to all-trans retinal triggers a conformational change that activates signaling via G-proteins. Subsequent receptor phosphorylation mediates displacement of the bound G-protein alpha subunit by arrestin and terminates signaling. This is Rhodopsin (RHO) from Alligator mississippiensis (American alligator).